Reading from the N-terminus, the 280-residue chain is C-type lectin domain family 1 member A (280 aa).

The segment at 1–44 (MQAKYSSTRDMLDDDGDTTMSLHSQGSATTRHPEPRRTEHRAPS) is disordered. Residues 1-52 (MQAKYSSTRDMLDDDGDTTMSLHSQGSATTRHPEPRRTEHRAPSSTWRPVAL) lie on the Cytoplasmic side of the membrane. The segment covering 18–30 (TTMSLHSQGSATT) has biased composition (polar residues). Residues 31–42 (RHPEPRRTEHRA) show a composition bias toward basic and acidic residues. A helical; Signal-anchor for type II membrane protein membrane pass occupies residues 53 to 73 (TLLTLCLVLLIGLAALGLLFF). The Extracellular segment spans residues 74–280 (QYYQLSNTGQ…VPPETLGEGD (207 aa)). N-linked (GlcNAc...) asparagine glycans are attached at residues N95 and N169. In terms of domain architecture, C-type lectin spans 144 to 258 (HGDNCYQFYK…CKELKRCVCE (115 aa)). 2 disulfide bridges follow: C165/C257 and C236/C249.

Expressed preferentially in dendritic cells.

Its subcellular location is the membrane. This is C-type lectin domain family 1 member A (CLEC1A) from Homo sapiens (Human).